The following is a 597-amino-acid chain: Plasmepsin V (597 aa).

The Lumenal segment spans residues 1 to 551 (MNNYFLRKEN…EKENIFLKVS (551 aa)). Residues 33 to 88 (CNNVENKIDNVGKKIENVGKKIGDMENKNDNVENKNDNVENKNDNVGNKNDNVKNA) adopt a coiled-coil conformation. Over residues 58-75 (ENKNDNVENKNDNVENKN) the composition is skewed to basic and acidic residues. Positions 58–83 (ENKNDNVENKNDNVENKNDNVGNKND) are disordered. Residues 107-521 (YFLDIDIGKP…DLQQNQIAFI (415 aa)) form the Peptidase A1 domain. Aspartate 125 is a catalytic residue. Intrachain disulfides connect cysteine 135–cysteine 218, cysteine 138–cysteine 141, cysteine 162–cysteine 173, cysteine 167–cysteine 178, cysteine 266–cysteine 525, cysteine 396–cysteine 441, and cysteine 450–cysteine 486. The segment covering 289–298 (KEKQKMDKSD) has biased composition (basic and acidic residues). Positions 289-323 (KEKQKMDKSDNNSSNKGNVSIKLKNNDKNDDEENN) are disordered. Residues 299 to 311 (NNSSNKGNVSIKL) are compositionally biased toward low complexity. The active site involves aspartate 372. Residues 552–572 (YINLYCLWLLLALTILLSLIL) form a helical membrane-spanning segment. The Cytoplasmic segment spans residues 573-597 (YVRKMFYMDYFPLSDQNKSPIQEST).

This sequence belongs to the peptidase A1 family. Component of a complex composed of SPC25 and PMV; the interaction is mediated via the transmembrane domains. The complex interacts with the SEC61 channel-forming translocon complex and is involved in the recognition and import of PEXEL motif-containing proteins into the ER for subsequent export. In terms of processing, it is not clear if the zymogen has a cleavable propeptide. In vitro, appears to be cleaved between Asn-87 and Ala-88. Cleavage of the putative propeptide is dispensable for catalytic activity.

The protein resides in the endoplasmic reticulum membrane. Functionally, during the asexual blood stage, plays an essential role in the export of several proteins into the host erythrocytes by cleaving the pentameric localization motif RxLxE/Q/D (termed Plasmodium export element (PEXEL)) located downstream of the N-terminal secretory signal sequence. Specifically, cleaves after the leucine residue in the RxLxE/Q/D (or RxLxxE) motif of exported proteins including RESA, EMP2, EMP3, KAHRP, RIF/Rifin and STEVOR. Also, by regulating protein export, plays an essential role in gametocyte development and thus parasite transmission to the mosquito vector. This Plasmodium falciparum (isolate HB3) protein is Plasmepsin V.